The chain runs to 862 residues: Aldehyde-alcohol dehydrogenase (862 aa).

C244 is an active-site residue. An NAD(+)-binding site is contributed by 420-425 (GFWGGN).

It in the N-terminal section; belongs to the aldehyde dehydrogenase family. The protein in the C-terminal section; belongs to the iron-containing alcohol dehydrogenase family.

The enzyme catalyses a primary alcohol + NAD(+) = an aldehyde + NADH + H(+). The catalysed reaction is a secondary alcohol + NAD(+) = a ketone + NADH + H(+). It catalyses the reaction an aldehyde + NAD(+) + H2O = a carboxylate + NADH + 2 H(+). Has both aldehyde and alcohol dehydrogenase activities. Can use acetaldehyde, butyraldehyde, butanol and ethanol. This Clostridium acetobutylicum (strain ATCC 824 / DSM 792 / JCM 1419 / IAM 19013 / LMG 5710 / NBRC 13948 / NRRL B-527 / VKM B-1787 / 2291 / W) protein is Aldehyde-alcohol dehydrogenase.